A 381-amino-acid polypeptide reads, in one-letter code: Probable tRNA sulfurtransferase (381 aa).

Positions 60–168 (REATEVLTRV…EGKAYIFVDK (109 aa)) constitute a THUMP domain. ATP contacts are provided by residues 186-187 (LL), lysine 269, glycine 291, and glutamine 300.

This sequence belongs to the ThiI family.

It is found in the cytoplasm. The catalysed reaction is [ThiI sulfur-carrier protein]-S-sulfanyl-L-cysteine + a uridine in tRNA + 2 reduced [2Fe-2S]-[ferredoxin] + ATP + H(+) = [ThiI sulfur-carrier protein]-L-cysteine + a 4-thiouridine in tRNA + 2 oxidized [2Fe-2S]-[ferredoxin] + AMP + diphosphate. It carries out the reaction [ThiS sulfur-carrier protein]-C-terminal Gly-Gly-AMP + S-sulfanyl-L-cysteinyl-[cysteine desulfurase] + AH2 = [ThiS sulfur-carrier protein]-C-terminal-Gly-aminoethanethioate + L-cysteinyl-[cysteine desulfurase] + A + AMP + 2 H(+). Its pathway is cofactor biosynthesis; thiamine diphosphate biosynthesis. Catalyzes the ATP-dependent transfer of a sulfur to tRNA to produce 4-thiouridine in position 8 of tRNAs, which functions as a near-UV photosensor. Also catalyzes the transfer of sulfur to the sulfur carrier protein ThiS, forming ThiS-thiocarboxylate. This is a step in the synthesis of thiazole, in the thiamine biosynthesis pathway. The sulfur is donated as persulfide by IscS. This is Probable tRNA sulfurtransferase from Thermococcus kodakarensis (strain ATCC BAA-918 / JCM 12380 / KOD1) (Pyrococcus kodakaraensis (strain KOD1)).